A 1067-amino-acid chain; its full sequence is DNA-directed RNA polymerase subunit beta (1067 aa).

Belongs to the RNA polymerase beta chain family. As to quaternary structure, in plastids the minimal PEP RNA polymerase catalytic core is composed of four subunits: alpha, beta, beta', and beta''. When a (nuclear-encoded) sigma factor is associated with the core the holoenzyme is formed, which can initiate transcription.

Its subcellular location is the plastid. It localises to the chloroplast. It carries out the reaction RNA(n) + a ribonucleoside 5'-triphosphate = RNA(n+1) + diphosphate. DNA-dependent RNA polymerase catalyzes the transcription of DNA into RNA using the four ribonucleoside triphosphates as substrates. The sequence is that of DNA-directed RNA polymerase subunit beta from Ipomoea purpurea (Common morning glory).